The chain runs to 549 residues: Ribosomal protein S6 kinase-like 1 (549 aa).

The MIT domain maps to 87–115; the sequence is IHVDPNKERREAVKLKITKYLRRAEEIFN. One can recognise a Protein kinase domain in the interval 145–539; sequence SAVEQLRGCR…VSKLKSHPFF (395 aa). Residues 151-159 and Lys-177 each bind ATP; that span reads RGCRVVGVI. Residues 260–325 form a disordered region; it reads LTPARLPSGH…SDLPKAPGGH (66 aa). Asp-412 serves as the catalytic Proton acceptor.

The protein belongs to the protein kinase superfamily. Ser/Thr protein kinase family. S6 kinase subfamily.

The enzyme catalyses L-seryl-[protein] + ATP = O-phospho-L-seryl-[protein] + ADP + H(+). The catalysed reaction is L-threonyl-[protein] + ATP = O-phospho-L-threonyl-[protein] + ADP + H(+). In Pongo abelii (Sumatran orangutan), this protein is Ribosomal protein S6 kinase-like 1 (RPS6KL1).